Here is a 572-residue protein sequence, read N- to C-terminus: 3-ketosteroid oxygenase (572 aa).

Transmembrane regions (helical) follow at residues 52-72 (AFALSHHIIMGIYLLILRNFL) and 84-104 (YFMRVFIVHIIYIIISYFIRI).

This sequence belongs to the cytochrome P450 family. As to expression, expressed in the 2 embryonic head hypodermal cells XXXL/R.

The protein resides in the membrane. It catalyses the reaction 5alpha-cholest-7-en-3-one + 3 reduced [NADPH--hemoprotein reductase] + 3 O2 = (25S)-Delta7-dafachronate + 3 oxidized [NADPH--hemoprotein reductase] + 4 H2O + 4 H(+). The catalysed reaction is cholest-4-en-3-one + 3 reduced [NADPH--hemoprotein reductase] + 3 O2 = (25S)-3-oxocholest-4-en-26-oate + 3 oxidized [NADPH--hemoprotein reductase] + 4 H2O + 4 H(+). It participates in steroid hormone biosynthesis; dafachronic acid biosynthesis. Functionally, converts the 3-keto steroids 4-cholesten-3-one and lathosterone into the carboxylic metabolites 3-keto-4-cholestenate (Delta(4)-dafachronic acid, Delta(4)-DA) and 3-keto-7,(5a)-cholestenate (Delta(7)-dafachronic acid, Delta(7)-DA) respectively, by catalyzing successive oxidations at C-26. Dafachronic acids bind directly to the nuclear hormone receptor (NHR) DAF-12, suppressing dauer formation and inducing reproductive growth. In a non-cell autonomous manner, negatively regulates body wall muscle arm extensions to motor neurons probably by preventing daf-12 isoform b activation. May be involved in thermotolerance. This chain is 3-ketosteroid oxygenase (daf-9), found in Caenorhabditis elegans.